Here is a 202-residue protein sequence, read N- to C-terminus: LexA repressor (202 aa).

A DNA-binding region (H-T-H motif) is located at residues 28–48 (RAEIAQQLGFRSPNAAEEHLK). Catalysis depends on for autocatalytic cleavage activity residues Ser-119 and Lys-156.

The protein belongs to the peptidase S24 family. Homodimer.

It catalyses the reaction Hydrolysis of Ala-|-Gly bond in repressor LexA.. Its function is as follows. Represses a number of genes involved in the response to DNA damage (SOS response), including recA and lexA. Binds to the 16 bp palindromic sequence 5'-CTGTATATATATACAG-3'. In the presence of single-stranded DNA, RecA interacts with LexA causing an autocatalytic cleavage which disrupts the DNA-binding part of LexA, leading to derepression of the SOS regulon and eventually DNA repair. This is LexA repressor from Pectobacterium carotovorum subsp. carotovorum (Erwinia carotovora subsp. carotovora).